Consider the following 328-residue polypeptide: MTTNFSILASAKALPTTKVTNQELTQLMATSDDWIKQRTGIRSRHVATDETTTSLAVSVAQQLLQQSRLAATAIDLIIVATMSPDYLTPATAPQVQAAIGAEKAIAFDINVACAGFVYGMQLVHQYLQPGQTALLIGSETLSRLVDWHDRSTAVLFGDGAGGLLITAKPNTTTGHWLGGHYATFGADGHYLTAGQQPQVNPWSTRTDGADSNRWAFQMNGRRVYDFATKQVPHSIEQALMQARLESSDIKAFVLHQANARIVKSVGQKLNLATEQLPMNIAQYGNTAAASEPILFAEMVAQKQVQRGDKLVFTGFGGGLSVGSAVIEY.

Residues Cys113 and His255 contribute to the active site. The ACP-binding stretch occupies residues Gln256–Arg260. Residue Asn285 is part of the active site.

Belongs to the thiolase-like superfamily. FabH family. In terms of assembly, homodimer.

The protein resides in the cytoplasm. It carries out the reaction malonyl-[ACP] + acetyl-CoA + H(+) = 3-oxobutanoyl-[ACP] + CO2 + CoA. The protein operates within lipid metabolism; fatty acid biosynthesis. Its function is as follows. Catalyzes the condensation reaction of fatty acid synthesis by the addition to an acyl acceptor of two carbons from malonyl-ACP. Catalyzes the first condensation reaction which initiates fatty acid synthesis and may therefore play a role in governing the total rate of fatty acid production. Possesses both acetoacetyl-ACP synthase and acetyl transacylase activities. Its substrate specificity determines the biosynthesis of branched-chain and/or straight-chain of fatty acids. The polypeptide is Beta-ketoacyl-[acyl-carrier-protein] synthase III 2 (Lactiplantibacillus plantarum (strain ATCC BAA-793 / NCIMB 8826 / WCFS1) (Lactobacillus plantarum)).